The following is a 460-amino-acid chain: Indoleacetamide hydrolase (460 aa).

Residues Lys71 and Ser146 each act as charge relay system in the active site. The active-site Acyl-ester intermediate is Ser169.

Belongs to the amidase family.

It functions in the pathway plant hormone metabolism; auxin biosynthesis. In terms of biological role, hydrolyzes indole-3-acetamide (IAM) into indole-3-acetic acid (IAA). This is Indoleacetamide hydrolase (iaaH) from Pantoea agglomerans pv. gypsophilae (Erwinia herbicola).